A 205-amino-acid chain; its full sequence is MSQIILASASPRRKELLEQIGAEFVVCPAKGEEIITEEEPSAVVMELSRQKAEEVASGVLTYNEQHAELVTPQDILVIGADTVVAYENQILGKPKDEEDARRMLSMLSGKTHSVYTGVTFVFIDKAGRTGEHCFYEKTDVSMYKLTEEEIDRYISSGDPMDKAGSYGIQGRFAIHIKGIHGDYNNVVGLPVARLYQELRKLGVDV.

Residue Asp81 is the Proton acceptor of the active site.

The protein belongs to the Maf family. YhdE subfamily. It depends on a divalent metal cation as a cofactor.

Its subcellular location is the cytoplasm. It carries out the reaction dTTP + H2O = dTMP + diphosphate + H(+). The enzyme catalyses UTP + H2O = UMP + diphosphate + H(+). Nucleoside triphosphate pyrophosphatase that hydrolyzes dTTP and UTP. May have a dual role in cell division arrest and in preventing the incorporation of modified nucleotides into cellular nucleic acids. This chain is dTTP/UTP pyrophosphatase, found in Agathobacter rectalis (strain ATCC 33656 / DSM 3377 / JCM 17463 / KCTC 5835 / VPI 0990) (Eubacterium rectale).